The primary structure comprises 305 residues: tRNA-cytidine(32) 2-sulfurtransferase (305 aa).

Residues 1 to 20 (MTAVLPLPHPLADPAPRDPR) form a disordered region. The PP-loop motif signature appears at 59-64 (SGGKDS). Residues cysteine 134, cysteine 137, and cysteine 225 each coordinate [4Fe-4S] cluster. Residues 282–293 (DAPPDLAPDPGA) are compositionally biased toward low complexity. Residues 282–305 (DAPPDLAPDPGAWLTASDATHDSD) form a disordered region.

It belongs to the TtcA family. As to quaternary structure, homodimer. Requires Mg(2+) as cofactor. [4Fe-4S] cluster is required as a cofactor.

The protein resides in the cytoplasm. It carries out the reaction cytidine(32) in tRNA + S-sulfanyl-L-cysteinyl-[cysteine desulfurase] + AH2 + ATP = 2-thiocytidine(32) in tRNA + L-cysteinyl-[cysteine desulfurase] + A + AMP + diphosphate + H(+). It functions in the pathway tRNA modification. Its function is as follows. Catalyzes the ATP-dependent 2-thiolation of cytidine in position 32 of tRNA, to form 2-thiocytidine (s(2)C32). The sulfur atoms are provided by the cysteine/cysteine desulfurase (IscS) system. In Xanthomonas oryzae pv. oryzae (strain MAFF 311018), this protein is tRNA-cytidine(32) 2-sulfurtransferase.